A 281-amino-acid polypeptide reads, in one-letter code: Cytochrome c oxidase subunit 3 (281 aa).

Helical transmembrane passes span 34–54, 59–79, 103–123, 148–168, 179–199, 220–240, and 259–279; these read PWPIAVSFSLLVVTLSGVMTF, NGLFLLTLGFISLVSTMTLWF, GFVLFVVSEVFFFISIFWAFF, WEVPLLNTVILLSSGATVTYA, VIYGLIATIVLATVFTGFQGF, ATGFHGIHVLVGTIFLTVGLF, and ILYWHFVDVVWLFLFISVYWW.

This sequence belongs to the cytochrome c oxidase subunit 3 family. Component of the cytochrome c oxidase (complex IV, CIV), a multisubunit enzyme composed of a catalytic core of 3 subunits and several supernumerary subunits. The complex exists as a monomer or a dimer and forms supercomplexes (SCs) in the inner mitochondrial membrane with ubiquinol-cytochrome c oxidoreductase (cytochrome b-c1 complex, complex III, CIII).

The protein resides in the mitochondrion inner membrane. The catalysed reaction is 4 Fe(II)-[cytochrome c] + O2 + 8 H(+)(in) = 4 Fe(III)-[cytochrome c] + 2 H2O + 4 H(+)(out). Its function is as follows. Component of the cytochrome c oxidase, the last enzyme in the mitochondrial electron transport chain which drives oxidative phosphorylation. The respiratory chain contains 3 multisubunit complexes succinate dehydrogenase (complex II, CII), ubiquinol-cytochrome c oxidoreductase (cytochrome b-c1 complex, complex III, CIII) and cytochrome c oxidase (complex IV, CIV), that cooperate to transfer electrons derived from NADH and succinate to molecular oxygen, creating an electrochemical gradient over the inner membrane that drives transmembrane transport and the ATP synthase. Cytochrome c oxidase is the component of the respiratory chain that catalyzes the reduction of oxygen to water. Electrons originating from reduced cytochrome c in the intermembrane space (IMS) are transferred via the dinuclear copper A center (CU(A)) of subunit 2 and heme A of subunit 1 to the active site in subunit 1, a binuclear center (BNC) formed by heme A3 and copper B (CU(B)). The BNC reduces molecular oxygen to 2 water molecules using 4 electrons from cytochrome c in the IMS and 4 protons from the mitochondrial matrix. The polypeptide is Cytochrome c oxidase subunit 3 (COX3) (Rhizopus stolonifer (Rhizopus nigricans)).